The chain runs to 168 residues: Xanthine-guanine phosphoribosyltransferase (168 aa).

Residues 46–47 (RG) and 101–109 (DDLVDSGVT) contribute to the 5-phospho-alpha-D-ribose 1-diphosphate site. D102 lines the Mg(2+) pocket. D105 is a binding site for guanine. Xanthine-binding residues include D105 and V148. GMP-binding positions include 105–109 (DSGVT) and 147–148 (WV).

This sequence belongs to the purine/pyrimidine phosphoribosyltransferase family. XGPT subfamily. In terms of assembly, homotetramer. Mg(2+) is required as a cofactor.

It localises to the cell inner membrane. The catalysed reaction is GMP + diphosphate = guanine + 5-phospho-alpha-D-ribose 1-diphosphate. It carries out the reaction XMP + diphosphate = xanthine + 5-phospho-alpha-D-ribose 1-diphosphate. The enzyme catalyses IMP + diphosphate = hypoxanthine + 5-phospho-alpha-D-ribose 1-diphosphate. Its pathway is purine metabolism; GMP biosynthesis via salvage pathway; GMP from guanine: step 1/1. The protein operates within purine metabolism; XMP biosynthesis via salvage pathway; XMP from xanthine: step 1/1. In terms of biological role, purine salvage pathway enzyme that catalyzes the transfer of the ribosyl-5-phosphate group from 5-phospho-alpha-D-ribose 1-diphosphate (PRPP) to the N9 position of the 6-oxopurines guanine and xanthine to form the corresponding ribonucleotides GMP (guanosine 5'-monophosphate) and XMP (xanthosine 5'-monophosphate), with the release of PPi. To a lesser extent, also acts on hypoxanthine. The protein is Xanthine-guanine phosphoribosyltransferase of Gluconobacter oxydans (strain 621H) (Gluconobacter suboxydans).